A 429-amino-acid chain; its full sequence is Ribosomal RNA small subunit methyltransferase B (429 aa).

Residues 254–260, Asp-277, Asp-303, and Asp-322 each bind S-adenosyl-L-methionine; that span reads CAAPGGK. Cys-375 functions as the Nucleophile in the catalytic mechanism. The interval 397 to 419 is disordered; sequence ALSETGTPDQPGQQNLPGGEEGD. The segment covering 400-412 has biased composition (polar residues); the sequence is ETGTPDQPGQQNL.

Belongs to the class I-like SAM-binding methyltransferase superfamily. RsmB/NOP family.

The protein localises to the cytoplasm. The catalysed reaction is cytidine(967) in 16S rRNA + S-adenosyl-L-methionine = 5-methylcytidine(967) in 16S rRNA + S-adenosyl-L-homocysteine + H(+). In terms of biological role, specifically methylates the cytosine at position 967 (m5C967) of 16S rRNA. This chain is Ribosomal RNA small subunit methyltransferase B, found in Salmonella newport (strain SL254).